The primary structure comprises 100 residues: ESAT-6-like protein EsxB (100 aa).

Positions 80–100 (GTQYTSTDEDQAGTLASSMNI) are disordered.

It belongs to the WXG100 family. CFP-10 subfamily. Forms a tight 1:1 complex with EsxA. An artificial EsxA-EsxB heterodimer interacts with EspA.

It is found in the secreted. In terms of biological role, an exported protein. Plays a role in DNA conjugation, in at least a donor strain. This is ESAT-6-like protein EsxB from Mycolicibacterium smegmatis (strain ATCC 700084 / mc(2)155) (Mycobacterium smegmatis).